Here is a 96-residue protein sequence, read N- to C-terminus: MSAVTRCEDGLVLRLYIQPKASRDSIVGLHGDEVKIAITAPPVDGQANSHLTKFLGKQFRVAKSQIVIEKGELGRHKQVKIIHPQQIPPEIAALTE.

Belongs to the UPF0235 family.

In Salmonella typhimurium (strain LT2 / SGSC1412 / ATCC 700720), this protein is UPF0235 protein YggU.